The following is a 380-amino-acid chain: Cytochrome b (380 aa).

4 helical membrane passes run Phe-34–Met-54, Trp-78–Ile-99, Trp-114–Leu-134, and Phe-179–Thr-199. Heme b is bound by residues His-84 and His-98. His-183 and His-197 together coordinate heme b. His-202 provides a ligand contact to a ubiquinone. 4 helical membrane passes run Thr-227–Ser-247, Leu-289–His-309, Leu-321–Ser-341, and Phe-348–Pro-368.

It belongs to the cytochrome b family. In terms of assembly, the cytochrome bc1 complex contains 11 subunits: 3 respiratory subunits (MT-CYB, CYC1 and UQCRFS1), 2 core proteins (UQCRC1 and UQCRC2) and 6 low-molecular weight proteins (UQCRH/QCR6, UQCRB/QCR7, UQCRQ/QCR8, UQCR10/QCR9, UQCR11/QCR10 and a cleavage product of UQCRFS1). This cytochrome bc1 complex then forms a dimer. It depends on heme b as a cofactor.

Its subcellular location is the mitochondrion inner membrane. Functionally, component of the ubiquinol-cytochrome c reductase complex (complex III or cytochrome b-c1 complex) that is part of the mitochondrial respiratory chain. The b-c1 complex mediates electron transfer from ubiquinol to cytochrome c. Contributes to the generation of a proton gradient across the mitochondrial membrane that is then used for ATP synthesis. The protein is Cytochrome b (MT-CYB) of Pygoscelis papua (Gentoo penguin).